We begin with the raw amino-acid sequence, 334 residues long: Putative lysine N-acyltransferase C17G9.06c (334 aa).

Residue His-248 coordinates substrate. Glu-286 serves as the catalytic Proton acceptor.

It belongs to the lysine N-acyltransferase mbtK family.

It is found in the cytoplasm. The protein localises to the nucleus. In Schizosaccharomyces pombe (strain 972 / ATCC 24843) (Fission yeast), this protein is Putative lysine N-acyltransferase C17G9.06c.